A 244-amino-acid polypeptide reads, in one-letter code: DNA repair protein RecO (244 aa).

This sequence belongs to the RecO family.

In terms of biological role, involved in DNA repair and RecF pathway recombination. The sequence is that of DNA repair protein RecO from Koribacter versatilis (strain Ellin345).